The chain runs to 136 residues: uncharacterized protein (136 aa).

Residues 19 to 39 (LGFPLGTALLLIIIFSLSGIF) traverse the membrane as a helical segment. Disordered regions lie at residues 54–87 (SLANGRPSADIESNPYKPKPPFPEMKKPQNLSVP) and 112–136 (KLTVDVQTPPQSPPVKPARFPVPLY).

The protein resides in the membrane. This is an uncharacterized protein from Arabidopsis thaliana (Mouse-ear cress).